Here is a 276-residue protein sequence, read N- to C-terminus: NAD-capped RNA hydrolase NudC (276 aa).

R82 provides a ligand contact to substrate. Zn(2+)-binding residues include C112 and C115. E125 contacts substrate. The Zn(2+) site is built by C130 and C133. Position 138 (Y138) interacts with substrate. The 124-residue stretch at P139–Y262 folds into the Nudix hydrolase domain. Positions 172, 188, and 192 each coordinate a divalent metal cation. The Nudix box motif lies at G173–A194. Q206–S213 provides a ligand contact to substrate. Residue E233 coordinates a divalent metal cation. A255 is a binding site for substrate.

It belongs to the Nudix hydrolase family. NudC subfamily. In terms of assembly, homodimer. The cofactor is Mg(2+). Mn(2+) serves as cofactor. Zn(2+) is required as a cofactor.

It catalyses the reaction a 5'-end NAD(+)-phospho-ribonucleoside in mRNA + H2O = a 5'-end phospho-adenosine-phospho-ribonucleoside in mRNA + beta-nicotinamide D-ribonucleotide + 2 H(+). The enzyme catalyses NAD(+) + H2O = beta-nicotinamide D-ribonucleotide + AMP + 2 H(+). The catalysed reaction is NADH + H2O = reduced beta-nicotinamide D-ribonucleotide + AMP + 2 H(+). Its function is as follows. mRNA decapping enzyme that specifically removes the nicotinamide adenine dinucleotide (NAD) cap from a subset of mRNAs by hydrolyzing the diphosphate linkage to produce nicotinamide mononucleotide (NMN) and 5' monophosphate mRNA. The NAD-cap is present at the 5'-end of some mRNAs and stabilizes RNA against 5'-processing. Has preference for mRNAs with a 5'-end purine. Catalyzes the hydrolysis of a broad range of dinucleotide pyrophosphates. The sequence is that of NAD-capped RNA hydrolase NudC from Pseudomonas putida (strain ATCC 700007 / DSM 6899 / JCM 31910 / BCRC 17059 / LMG 24140 / F1).